The primary structure comprises 435 residues: Beta-arrestin arr-1 (435 aa).

Residues Leu-358–Gly-382 form a disordered region. Residues Lys-362 to Arg-372 are compositionally biased toward basic and acidic residues. A Clathrin box motif is present at residues Leu-390–His-394. The [DE]-X(1,2)-F-X-X-[FL]-X-X-X-R motif signature appears at Asp-404 to Arg-414. The interval His-416 to Leu-435 is disordered. The span at Pro-424–Leu-435 shows a compositional bias: low complexity.

This sequence belongs to the arrestin family. In terms of assembly, component of a complex composed of arr-1, daf-18 and mpz-1. Within the complex, interacts (via C-terminus) with mpz-1 (via PDZ domain) and phosphatase daf-18. May interact (via C-terminus) with clathrin chc-1 and beta-2 adaptin (AP2) apb-1. As to expression, expressed in head neurons, nerve ring and ventral nerve cord (at protein level). Expressed in the nervous system including the nerve ring and the ventral and dorsal nerve cords. Highly expressed in amphid chemosensory neurons AWA, AWB, AWC, ADL and ASH, and in hermaphrodite specific neuron HSN. Also expressed in the intestine.

The protein resides in the perikaryon. The protein localises to the cell projection. It localises to the dendrite. Its function is as follows. Adapter protein required for olfactory adaptation and recovery to volatile odorants, probably by desensitization of G-protein coupled receptors (GPCR). May play a role in clathrin-mediated GPCR endocytosis. Acts as a positive regulator of insulin-like daf-2 signaling pathway probably by forming a complex with mpz-1 and phosphatase daf-18 likely resulting in daf-18 inhibition. Involved in egg-laying. The chain is Beta-arrestin arr-1 from Caenorhabditis elegans.